Here is a 123-residue protein sequence, read N- to C-terminus: Large ribosomal subunit protein uL14 (123 aa).

It belongs to the universal ribosomal protein uL14 family. In terms of assembly, part of the 50S ribosomal subunit. Forms a cluster with proteins L3 and L19. In the 70S ribosome, L14 and L19 interact and together make contacts with the 16S rRNA in bridges B5 and B8.

Its function is as follows. Binds to 23S rRNA. Forms part of two intersubunit bridges in the 70S ribosome. In Buchnera aphidicola subsp. Cinara cedri (strain Cc), this protein is Large ribosomal subunit protein uL14.